Consider the following 449-residue polypeptide: 23S rRNA (uracil(1939)-C(5))-methyltransferase RlmD (449 aa).

Residues 1 to 66 (MGRSRHHNKL…AKFDEAKVVE (66 aa)) form the TRAM domain. [4Fe-4S] cluster contacts are provided by Cys-79, Cys-85, Cys-88, and Cys-169. The S-adenosyl-L-methionine site is built by Gln-280, Phe-309, Asn-314, Glu-330, Asn-357, and Asp-379. Cys-405 (nucleophile) is an active-site residue.

This sequence belongs to the class I-like SAM-binding methyltransferase superfamily. RNA M5U methyltransferase family. RlmD subfamily.

It catalyses the reaction uridine(1939) in 23S rRNA + S-adenosyl-L-methionine = 5-methyluridine(1939) in 23S rRNA + S-adenosyl-L-homocysteine + H(+). In terms of biological role, catalyzes the formation of 5-methyl-uridine at position 1939 (m5U1939) in 23S rRNA. This chain is 23S rRNA (uracil(1939)-C(5))-methyltransferase RlmD, found in Francisella tularensis subsp. novicida (strain U112).